The chain runs to 88 residues: Meiosis-expressed gene 1 protein (88 aa).

Belongs to the MEIG1 family. Interacts with PACRG. Interacts with MORN3. Expressed in the testes (at protein level). Expressed in the ovary. Several isoforms have been identified differing in their 5'-untranslated exons. These isoforms show different tissue expression. Some are expressed in various tissues, including lung, liver, brain, testis, oviduct and oocytes. Some are testis-specific.

Its function is as follows. Essential for spermiogenesis. The sequence is that of Meiosis-expressed gene 1 protein from Mus musculus (Mouse).